Reading from the N-terminus, the 332-residue chain is Ribosomal RNA small subunit methyltransferase C (332 aa).

This sequence belongs to the methyltransferase superfamily. RsmC family. As to quaternary structure, monomer.

It localises to the cytoplasm. It carries out the reaction guanosine(1207) in 16S rRNA + S-adenosyl-L-methionine = N(2)-methylguanosine(1207) in 16S rRNA + S-adenosyl-L-homocysteine + H(+). In terms of biological role, specifically methylates the guanine in position 1207 of 16S rRNA in the 30S particle. In Pseudomonas syringae pv. tomato (strain ATCC BAA-871 / DC3000), this protein is Ribosomal RNA small subunit methyltransferase C.